The following is a 615-amino-acid chain: MRILQLHCDRIEYSPVKKEIAAAEEPATGGKLEDAVLAFVAVEKGDGPGEAARAAAELRQALGRIGCKKLLIYPYAHLSSTLAAPSIALGLISEMEAALHDLEVSRAPFGWTKSYTISVKGHPLAEGFKVITGDARGTGAPKALESESSMKSTWHVLTPDGNMTDASEFDFAGCPKLKALARYEASKKRGTDEPPPHVALMKRMGIADYEPASDAGNMKFFPNGRLIKSLIERYVTERVVEYGGYEVETPIMYDSNHPSMVSYFNRFPARQYSIDSEGKSLFLRFAACFGQFLMAGDYQLSYKNLPFRLYELTRYSFRREQSGELVGLRRLRAFTMPDCHAFCTDMAQAVREAGVRFELSRDVIGQLGLDAADYEMAIRLTEEFYAENGGAVREMVRRHGRPVLVEMWKERFFYFVLKWEFNYIDGAGKASALSTDQIDVENGKRYGIEFVDENNGRQHPVILHNSPSGAIERVIYTLLEKAAADSARGTKPELPLWLSPVQARIIPVGEELVRNATELAKEMAGHGIRADVDDRNESMGKRIREAEKEWVRYILVVGEKEAASGRLSVRDRRTGKSTEMGLDDLVEAVREQTAGKPSAGLNSPFYLSKRPQVML.

The tract at residues 1–132 (MRILQLHCDR…PLAEGFKVIT (132 aa)) is editing domain. The interval 196–495 (PHVALMKRMG…SARGTKPELP (300 aa)) is catalytic. Zn(2+) is bound by residues C288, H340, and H464.

The protein belongs to the class-II aminoacyl-tRNA synthetase family. As to quaternary structure, homodimer. Requires Zn(2+) as cofactor.

The protein localises to the cytoplasm. The catalysed reaction is tRNA(Thr) + L-threonine + ATP = L-threonyl-tRNA(Thr) + AMP + diphosphate + H(+). Functionally, catalyzes the attachment of threonine to tRNA(Thr) in a two-step reaction: L-threonine is first activated by ATP to form Thr-AMP and then transferred to the acceptor end of tRNA(Thr). Also edits incorrectly charged L-seryl-tRNA(Thr). This chain is Threonine--tRNA ligase (thrS), found in Cenarchaeum symbiosum (strain A).